A 1136-amino-acid chain; its full sequence is MAKMEVKTSLLDNMIGVGDMVLLEPLNEETFINNLKKRFDHSEIYTYIGSVVISVNPYRSLPIYSPEKVEEYRNRNFYELSPHIFALSDEAYRSLRDQDKDQCILITGESGAGKTEASKLVMSYVAAVCGKGAEVNQVKEQLLQSNPVLEAFGNAKTVRNDNSSRFGKYMDIEFDFKGDPLGGVISNYLLEKSRVVKQPRGERNFHVFYQLLSGASEELLNKLKLERDFSRYNYLSLDSAKVNGVDDAANFRTVRNAMQIVGFMDHEAESVLAVVAAVLKLGNIEFKPESRVNGLDESKIKDKNELKEICELTGIDQSVLERAFSFRTVEAKQEKVSTTLNVAQAYYARDALAKNLYSRLFSWLVNRINESIKAQTKVRKKVMGVLDIYGFEIFEDNSFEQFIINYCNEKLQQIFIELTLKEEQEEYIREDIEWTHIDYFNNAIICDLIENNTNGILAMLDEECLRPGTVTDETFLEKLNQVCATHQHFESRMSKCSRFLNDTSLPHSCFRIQHYAGKVLYQVEGFVDKNNDLLYRDLSQAMWKASHALIKSLFPEGNPAKINLKRPPTAGSQFKASVATLMKNLQTKNPNYIRCIKPNDKKAAHIFNEALVCHQIRYLGLLENVRVRRAGYAFRQAYEPCLERYKMLCKQTWPHWKGPARSGVEVLFNELEIPVEEYSFGRSKIFIRNPRTLFKLEDLRKQRLEDLATLIQKIYRGWKCRTHFLLMKKSQIVIAAWYRRYAQQKRYQQTKSSALVIQSYIRGWKARKILRELKHQKRCKEAVTTIAAYWHGTQARRELRRLKEEARNKHAIAVIWAYWLGSKARRELKRLKEEARRKHAVAVIWAYWLGLKVRREYRKFFRANAGKKIYEFTLQRIVQKYFLEMKNKMPSLSPIDKNWPSRPYLFLDSTHKELKRIFHLWRCKKYRDQFTDQQKLIYEEKLEASELFKDKKALYPSSVGQPFQGAYLEINKNPKYKKLKDAIEEKIIIAEVVNKINRANGKSTSRIFLLTNNNLLLADQKSGQIKSEVPLVDVTKVSMSSQNDGFFAVHLKEGSEAASKGDFLFSSDHLIEMATKLYRTTLSQTKQKLNIEISDEFLVQFRQDKVCVKFIQGNQKNGSVPTCKRKNNRLLEVAVP.

The Myosin motor domain maps to 15-701 (IGVGDMVLLE…TLFKLEDLRK (687 aa)). A Phosphoserine modification is found at S60. 108-115 (GESGAGKT) serves as a coordination point for ATP. K287 is covalently cross-linked (Glycyl lysine isopeptide (Lys-Gly) (interchain with G-Cter in SUMO1); alternate). A Glycyl lysine isopeptide (Lys-Gly) (interchain with G-Cter in SUMO2); alternate cross-link involves residue K287. Residues 578–600 (VATLMKNLQTKNPNYIRCIKPND) are actin-binding. IQ domains follow at residues 704-733 (LEDL…SQIV), 728-748 (KKSQ…KRYQ), 750-779 (TKSS…QKRC), 779-808 (CKEA…EARN), 808-837 (NKHA…EARR), and 837-866 (RKHA…ANAG). A TH1 domain is found at 952-1136 (KALYPSSVGQ…NNRLLEVAVP (185 aa)).

The protein belongs to the TRAFAC class myosin-kinesin ATPase superfamily. Myosin family.

In terms of biological role, motor protein that may participate in process critical to neuronal development and function such as cell migration, neurite outgrowth and vesicular transport. The polypeptide is Unconventional myosin-Ib (MYO1B) (Homo sapiens (Human)).